The following is a 798-amino-acid chain: Protocadherin beta-14 (798 aa).

Residues 1 to 26 form the signal peptide; the sequence is MEIRGALDLRKRQVLIFLVLLGLSRA. The Extracellular segment spans residues 27-686; the sequence is GTESAHYSVA…APAQAQADSL (660 aa). 5 consecutive Cadherin domains span residues 35–133, 138–242, 247–347, 352–451, and 456–561; these read VAEE…SPTF, ILIK…APEF, YEVQ…PPEV, ITKR…APAF, and YTLF…SPFV. Cys-96 and Cys-102 form a disulfide bridge. A glycan (N-linked (GlcNAc...) asparagine) is linked at Asn-169. 3 N-linked (GlcNAc...) asparagine glycosylation sites follow: Asn-359, Asn-418, and Asn-436. The N-linked (GlcNAc...) asparagine glycan is linked to Asn-567. A Cadherin 6 domain is found at 568–671; that stretch reads GSAPCTELVP…LVDGFSQPYL (104 aa). The chain crosses the membrane as a helical span at residues 687–711; sequence TVYLVVALASVSSLFLFSVLLFVAV. Residues 712 to 798 are Cytoplasmic-facing; that stretch reads RLCRRSRAAS…FRNSFGLNIQ (87 aa).

It is found in the cell membrane. Functionally, potential calcium-dependent cell-adhesion protein. May be involved in the establishment and maintenance of specific neuronal connections in the brain. This is Protocadherin beta-14 (PCDHB14) from Pan troglodytes (Chimpanzee).